A 154-amino-acid polypeptide reads, in one-letter code: UPF0547 protein C16orf87 homolog (154 aa).

Residues 43-119 (NAKHSEKSPP…KHEEEREKQE (77 aa)) are disordered. Positions 68-84 (VRREKINSTVNKDLENR) are enriched in basic and acidic residues. Phosphoserine is present on S91. A coiled-coil region spans residues 104 to 132 (KSSSAKKHEEEREKQEKEIDIYANLSDEK). A compositionally biased stretch (basic and acidic residues) spans 109–119 (KKHEEEREKQE).

This sequence belongs to the UPF0547 family.

The protein is UPF0547 protein C16orf87 homolog of Mus musculus (Mouse).